A 291-amino-acid chain; its full sequence is MTTLAIDIGGTKLAAALIGADGQIRDRRELPTPASQTPEALRDALSALVSPLQAHAQRVAIASTGIIRDGSLLALNPHNLGGLLHFPLVKTLEQLTNLPSIAINDAQAAAWAEYQALEGDITDMVFITVSTGVGGGVVSGGKLLTGPGGLAGHIGHTLADPHGPVCGCGRTGCVEAIASGRGIAAAAQGELAGADARTIFTRAGQGDEQAQQLIHRSARTLARLIADIKATTDCQCVVVGGSVGLAEGYLALVEMYLAQEPAAFHVDLLAAHYRHDAGLLGAALLAQGEKL.

ATP contacts are provided by residues 5–12 and 132–139; these read AIDIGGTK and GVGGGVVS. Residues histidine 156, cysteine 166, cysteine 168, and cysteine 173 each contribute to the Zn(2+) site.

This sequence belongs to the ROK (NagC/XylR) family. NanK subfamily. In terms of assembly, homodimer.

The catalysed reaction is an N-acyl-D-mannosamine + ATP = an N-acyl-D-mannosamine 6-phosphate + ADP + H(+). It functions in the pathway amino-sugar metabolism; N-acetylneuraminate degradation; D-fructose 6-phosphate from N-acetylneuraminate: step 2/5. In terms of biological role, catalyzes the phosphorylation of N-acetylmannosamine (ManNAc) to ManNAc-6-P. This chain is N-acetylmannosamine kinase, found in Escherichia coli O9:H4 (strain HS).